Consider the following 480-residue polypeptide: uncharacterized protein (480 aa).

N6-(pyridoxal phosphate)lysine is present on Lys-222.

It belongs to the Orn/Lys/Arg decarboxylase class-I family. Pyridoxal 5'-phosphate is required as a cofactor.

This is an uncharacterized protein from Bacillus subtilis (strain 168).